Consider the following 411-residue polypeptide: CinA-like protein (411 aa).

The protein belongs to the CinA family.

In Dictyoglomus thermophilum (strain ATCC 35947 / DSM 3960 / H-6-12), this protein is CinA-like protein.